The following is a 217-amino-acid chain: Probable GTP-binding protein EngB (217 aa).

An EngB-type G domain is found at 37-214; sequence AGIEVAFAGR…RAAMIRLLDE (178 aa). Residues 45-52, 72-76, 92-95, 159-162, and 193-195 each bind GTP; these read GRSNVGKS, GRTQE, DMPG, TKAD, and TSS. Positions 52 and 74 each coordinate Mg(2+).

This sequence belongs to the TRAFAC class TrmE-Era-EngA-EngB-Septin-like GTPase superfamily. EngB GTPase family. Requires Mg(2+) as cofactor.

In terms of biological role, necessary for normal cell division and for the maintenance of normal septation. This chain is Probable GTP-binding protein EngB, found in Rhodopseudomonas palustris (strain BisB5).